The following is an 857-amino-acid chain: Putative serine/threonine-protein kinase receptor (857 aa).

An N-terminal signal peptide occupies residues 1 to 32; it reads MKGARNIYHHSYMSFLLVFVVMILIHPALSIY. At 33–446 the chain is on the extracellular side; the sequence is INTLSSTESL…IAKKRNASGK (414 aa). The region spanning 35–155 is the Bulb-type lectin domain; that stretch reads TLSSTESLTI…SNNDASEYLW (121 aa). 6 N-linked (GlcNAc...) asparagine glycosylation sites follow: Asn47, Asn120, Asn196, Asn260, Asn389, and Asn442. Residues 350–433 form the PAN domain; the sequence is CSGDGFTRMK…DGQDLYVRLA (84 aa). 2 disulfide bridges follow: Cys380–Cys405 and Cys388–Cys390. The helical transmembrane segment at 447 to 466 threads the bilayer; sequence IISLTVGVSVLLLLIMFCLW. Topologically, residues 467 to 857 are cytoplasmic; it reads KRKQKRAKAS…QYTCSVIDAR (391 aa). The region spanning 528–779 is the Protein kinase domain; sequence FSSCNKLGQG…PSIFQPQEVL (252 aa). Residues 534–542 and Lys556 each bind ATP; that span reads LGQGGFGIV. The Proton acceptor role is filled by Asp653.

Belongs to the protein kinase superfamily. Ser/Thr protein kinase family. As to expression, predominantly in the pistil and anther.

The protein resides in the membrane. The catalysed reaction is L-seryl-[protein] + ATP = O-phospho-L-seryl-[protein] + ADP + H(+). It carries out the reaction L-threonyl-[protein] + ATP = O-phospho-L-threonyl-[protein] + ADP + H(+). Its function is as follows. Involved in sporophytic self-incompatibility system (the inability of flowering plants to achieve self-fertilization), probably acting in combination with S-locus-specific glycoproteins. Interaction with a ligand in the extracellular domain triggers the protein kinase activity of the cytoplasmic domain. In Brassica oleracea var. viridis (Flowering kale), this protein is Putative serine/threonine-protein kinase receptor (SRK6).